The primary structure comprises 380 residues: MDFEQLKQDVIAYSKTIGIDKIGFASASPFEELKQRLIQQQQLNYQSGFEEPDIEKRTNPQLLLSGAKSIIAIALAYPSKLKNAPLSKRGERRGIFCRASWGQDYHLVLRDRLQKLEAYLIEKLPDIEVKSMVDTGELSDRAVSERAGIGWSGKNCSIITPEFGSYVYLGEMITNVPFPPDQPIEDQCGSCTKCIDICPTGALIQGGQLDSKKCIAFLTQTKGFLPEEYRDKIGNRIYGCDTCQTVCPKNKGMDFHNHPEMEPDPELVKPLLTPLLTISNRDFKEKYGIMSGSWRGKKPLQRNAILALAHFKEASAIPDLIGVMKDDPRPVLRGTAAWALGKIGGDGVGEAIEKAMQREKDEEVLHEMNRGLELLAQKKE.

D134 functions as the Proton donor in the catalytic mechanism. In terms of domain architecture, 4Fe-4S ferredoxin-type 1 spans 179–208 (PPDQPIEDQCGSCTKCIDICPTGALIQGGQ). [4Fe-4S] cluster contacts are provided by C188, C191, C194, C198, C214, C240, C243, and C247. A 4Fe-4S ferredoxin-type 2 domain is found at 226–258 (PEEYRDKIGNRIYGCDTCQTVCPKNKGMDFHNH).

The protein belongs to the QueG family. Monomer. Cob(II)alamin serves as cofactor. It depends on [4Fe-4S] cluster as a cofactor.

The protein localises to the cytoplasm. The enzyme catalyses epoxyqueuosine(34) in tRNA + AH2 = queuosine(34) in tRNA + A + H2O. It functions in the pathway tRNA modification; tRNA-queuosine biosynthesis. Its function is as follows. Catalyzes the conversion of epoxyqueuosine (oQ) to queuosine (Q), which is a hypermodified base found in the wobble positions of tRNA(Asp), tRNA(Asn), tRNA(His) and tRNA(Tyr). The sequence is that of Epoxyqueuosine reductase from Bacillus anthracis.